Consider the following 216-residue polypeptide: Large ribosomal subunit protein uL24m (216 aa).

Residues 1 to 9 (MRLSALLAL) constitute a mitochondrion transit peptide. S24 carries the phosphoserine modification. One can recognise a KOW domain in the interval 56–89 (LFCGDMVEILEGKDAGKQGKVVQVVRQRNWVVLE).

Belongs to the universal ribosomal protein uL24 family. Component of the mitochondrial ribosome large subunit (39S) which comprises a 16S rRNA and about 50 distinct proteins.

The protein localises to the mitochondrion. The protein is Large ribosomal subunit protein uL24m (Mrpl24) of Mus musculus (Mouse).